The sequence spans 262 residues: Merozoite surface protein 2 (262 aa).

A signal peptide spans 1–20 (MKVIKTLSIINFFIFVTFNI). N22 and N36 each carry an N-linked (GlcNAc...) asparagine glycan. The segment at 44–188 (AESKPPTGTG…EQTESPELQS (145 aa)) is polymorphic region. Residues 44-223 (AESKPPTGTG…DSQKECTDGN (180 aa)) form a disordered region. A compositionally biased stretch (gly residues) spans 51-66 (GTGGSGSAGSGAGASA). Residues 67-111 (GNGANPGADAERSPSTPATPATPATTTTTTTTNDAEASTSTSSEN) are compositionally biased toward low complexity. The segment covering 112-127 (PNHKNAETNPKGKGEV) has biased composition (basic and acidic residues). Polar residues-rich tracts occupy residues 129-155 (KPNQANKETQNNSNVQQDSQTKSNVPP) and 162-190 (KSPTAQPEQAENSAPTAEQTESPELQSAP). N139 carries an N-linked (GlcNAc...) asparagine glycan. The N-linked (GlcNAc...) asparagine glycan is linked to N211. The cysteines at positions 219 and 227 are disulfide-linked. N-linked (GlcNAc...) asparagine glycosylation is found at N235 and N236. Residue N236 is the site of GPI-anchor amidated asparagine attachment. The propeptide at 237–262 (SSNIASINKFVVLISATLVLSFAIFI) is removed in mature form.

The protein localises to the cell membrane. In terms of biological role, may play a role in the merozoite attachment to the erythrocyte. This Plasmodium falciparum (isolate Camp / Malaysia) protein is Merozoite surface protein 2.